The following is a 622-amino-acid chain: Chaperone protein HscA homolog (622 aa).

Belongs to the heat shock protein 70 family.

Functionally, chaperone involved in the maturation of iron-sulfur cluster-containing proteins. Has a low intrinsic ATPase activity which is markedly stimulated by HscB. This chain is Chaperone protein HscA homolog, found in Methylobacillus flagellatus (strain ATCC 51484 / DSM 6875 / VKM B-1610 / KT).